Consider the following 63-residue polypeptide: Large ribosomal subunit protein uL29 (63 aa).

The protein belongs to the universal ribosomal protein uL29 family.

The chain is Large ribosomal subunit protein uL29 from Shewanella oneidensis (strain ATCC 700550 / JCM 31522 / CIP 106686 / LMG 19005 / NCIMB 14063 / MR-1).